A 266-amino-acid chain; its full sequence is UPF0294 protein YafD (266 aa).

This sequence belongs to the UPF0294 family.

The protein resides in the cytoplasm. The polypeptide is UPF0294 protein YafD (yafD) (Escherichia coli O157:H7).